The primary structure comprises 317 residues: Porphobilinogen deaminase (317 aa).

S-(dipyrrolylmethanemethyl)cysteine is present on Cys240.

The protein belongs to the HMBS family. In terms of assembly, monomer. Requires dipyrromethane as cofactor.

It catalyses the reaction 4 porphobilinogen + H2O = hydroxymethylbilane + 4 NH4(+). It functions in the pathway porphyrin-containing compound metabolism; protoporphyrin-IX biosynthesis; coproporphyrinogen-III from 5-aminolevulinate: step 2/4. Its function is as follows. Tetrapolymerization of the monopyrrole PBG into the hydroxymethylbilane pre-uroporphyrinogen in several discrete steps. The protein is Porphobilinogen deaminase of Nitratidesulfovibrio vulgaris (strain DSM 19637 / Miyazaki F) (Desulfovibrio vulgaris).